Consider the following 205-residue polypeptide: Ypt/Rab-type GTPase ypt7 (205 aa).

GTP-binding positions include 17-23 (SGVGKTS), 33-40 (FSASYKAT), glycine 66, 125-128 (NKID), and 157-159 (SAK). The short motif at 37 to 45 (YKATIGADF) is the Effector region element. Residues cysteine 203 and cysteine 205 are each lipidated (S-geranylgeranyl cysteine). The residue at position 205 (cysteine 205) is a Cysteine methyl ester.

Belongs to the small GTPase superfamily. Rab family. Interacts with the Rab GDP dissociation inhibitor GDI1.

The protein localises to the vacuole. With respect to regulation, rab activation is generally mediated by a guanine exchange factor (GEF), while inactivation through hydrolysis of bound GTP is catalyzed by a GTPase activating protein (GAP). Its function is as follows. Ypt/Rab-type GTPases are key regulators of membrane trafficking and intracellular vesicular transport. They act as molecular switches that convert between GTP-bound and GDP-bound states, and regulate virtually all steps of membrane traffic from the formation of the transport vesicle at the donor membrane to its fusion at the target membrane. In the GDP-bound state, Ypt proteins are predominantly cytosolic, solubilized through the interaction with a GDP dissociation inhibitor (GDI). In the GTP-bound state, the proteins are membrane bound and interact with specific effector proteins that select cargo, promote vesicle movement, or verify the correct site of fusion. Required for fungal morphogenesis, vacuole fusion, autophagy, stress resistance and pathogenicity. This chain is Ypt/Rab-type GTPase ypt7, found in Pyricularia oryzae (strain 70-15 / ATCC MYA-4617 / FGSC 8958) (Rice blast fungus).